Here is a 67-residue protein sequence, read N- to C-terminus: Minor structural pilin EpdD (67 aa).

A propeptide spanning residues 1–13 is cleaved from the precursor; it reads MSVALKKFFSKRG. The QXSXEXXXL motif lies at 14–22; sequence QLSLEFSVL.

In terms of processing, the N-terminus is cleaved by the prepilin peptidase EppA, which recognizes the class III signal sequence. Post-translationally, N-glycosylated. Glycosylation is AglB-dependent. The N-glycosylation does not occur unless the signal peptide has been cleaved first.

The protein resides in the secreted. It localises to the cell surface. It is found in the fimbrium. Functionally, minor component of the type IV-like pili. Essential for pili formation. This chain is Minor structural pilin EpdD, found in Methanococcus maripaludis (strain DSM 14266 / JCM 13030 / NBRC 101832 / S2 / LL).